The sequence spans 155 residues: Small ribosomal subunit protein uS7 (155 aa).

The protein belongs to the universal ribosomal protein uS7 family. In terms of assembly, part of the 30S ribosomal subunit. Contacts proteins S9 and S11.

One of the primary rRNA binding proteins, it binds directly to 16S rRNA where it nucleates assembly of the head domain of the 30S subunit. Is located at the subunit interface close to the decoding center, probably blocks exit of the E-site tRNA. The protein is Small ribosomal subunit protein uS7 of Mycoplasma capricolum subsp. capricolum (strain California kid / ATCC 27343 / NCTC 10154).